Here is a 35-residue protein sequence, read N- to C-terminus: UPF0387 membrane protein YohO (35 aa).

The chain crosses the membrane as a helical span at residues 6 to 26 (IGVIALFLLMAIGGIGGVMLA).

This sequence belongs to the UPF0387 family.

Its subcellular location is the cell inner membrane. The polypeptide is UPF0387 membrane protein YohO (Salmonella paratyphi A (strain ATCC 9150 / SARB42)).